We begin with the raw amino-acid sequence, 387 residues long: GDSL esterase/lipase At2g23540 (387 aa).

Positions methionine 1–alanine 32 are cleaved as a signal peptide. Serine 55 acts as the Nucleophile in catalysis. N-linked (GlcNAc...) asparagine glycosylation is found at asparagine 139 and asparagine 159. Catalysis depends on residues aspartate 352 and histidine 355. Asparagine 380 carries an N-linked (GlcNAc...) asparagine glycan.

It belongs to the 'GDSL' lipolytic enzyme family.

The protein localises to the secreted. This is GDSL esterase/lipase At2g23540 from Arabidopsis thaliana (Mouse-ear cress).